Consider the following 723-residue polypeptide: Malonamoyl-CoA synthetase vrtB (723 aa).

This sequence belongs to the ATP-dependent AMP-binding enzyme family.

The protein operates within secondary metabolite biosynthesis; terpenoid biosynthesis. Functionally, malonamoyl-CoA synthetase; part of the gene cluster that mediates the biosynthesis of viridicatumtoxin, a tetracycline-like fungal meroterpenoid with a unique, fused spirobicyclic ring system. The first step of the pathway is the production of the malonamoyl-CoA starter unit for the polyketide synthase vrtA. The aldolase vrtJ may be involved in the synthesis of the malonamate substrate for malonamoyl-CoA synthetase vrtB. The polyketide synthase vrtA then may utilize the malonamoyl-CoA starter unit, followed by sequential condensation of eight malonyl-CoA units to form the polyketide backbone. The cyclization of the last ring could be mediated by the lactamase-like protein vrtG. The proposed post-PKS tailoring steps are a hydroxylation at C5 catalyzed the cytochrome P450 monooxygenase vrtE, a hydroxylation at C12a catalyzed by VrtH and/or VrtI, and an O-methylation by the O-methyltransferase vrtF. VrtC is then proposed to catalyze the transfer of a geranyl group synthesized by vrtD to the aromatic C ring of the tetracyclic polyketide intermediate of viridicatumtoxin to yield previridicatumtoxin. Finally, the cytochrome P450 monooxygenase vrtK catalyzes the spirocyclization of the geranyl moiety of previridicatumtoxin to afford viridicatumtoxin. In Penicillium aethiopicum, this protein is Malonamoyl-CoA synthetase vrtB.